The following is a 122-amino-acid chain: Large ribosomal subunit protein bL12 (122 aa).

This sequence belongs to the bacterial ribosomal protein bL12 family. Homodimer. Part of the ribosomal stalk of the 50S ribosomal subunit. Forms a multimeric L10(L12)X complex, where L10 forms an elongated spine to which 2 to 4 L12 dimers bind in a sequential fashion. Binds GTP-bound translation factors.

In terms of biological role, forms part of the ribosomal stalk which helps the ribosome interact with GTP-bound translation factors. Is thus essential for accurate translation. This is Large ribosomal subunit protein bL12 from Clostridium botulinum (strain 657 / Type Ba4).